A 283-amino-acid chain; its full sequence is Mitochondrial outer membrane protein porin (283 aa).

Belongs to the eukaryotic mitochondrial porin family.

Its subcellular location is the mitochondrion outer membrane. Functionally, forms a channel through the cell membrane that allows diffusion of small hydrophilic molecules. The channel adopts an open conformation at low or zero membrane potential and a closed conformation at potentials above 30-40 mV. The open state has a weak anion selectivity whereas the closed state is cation-selective. The chain is Mitochondrial outer membrane protein porin from Neurospora crassa (strain ATCC 24698 / 74-OR23-1A / CBS 708.71 / DSM 1257 / FGSC 987).